Consider the following 932-residue polypeptide: Probable serine/threonine-protein kinase clkA (932 aa).

Residues 1-10 (MDRFQTKRKT) are compositionally biased toward basic residues. Disordered stretches follow at residues 1–21 (MDRF…NNDY), 39–198 (YKNN…YGDT), and 212–562 (NDYD…TNTN). 2 stretches are compositionally biased toward low complexity: residues 11–21 (YSYNGYSNNDY) and 39–123 (YKNN…ENNY). Residues 124–143 (FQSENQSNKDQNSYFNSSYL) show a composition bias toward polar residues. 4 stretches are compositionally biased toward low complexity: residues 148-196 (DNYN…NSYG), 218-305 (NNNN…NGGN), 314-342 (VFNN…NNDY), and 351-562 (NIYS…TNTN). In terms of domain architecture, Protein kinase spans 590–920 (YKVLCTVGSG…ASDALSHPFL (331 aa)). ATP is bound by residues 596–604 (VGSGTFSTV) and lysine 619. Aspartate 719 functions as the Proton acceptor in the catalytic mechanism.

This sequence belongs to the protein kinase superfamily. CMGC Ser/Thr protein kinase family.

It carries out the reaction L-seryl-[protein] + ATP = O-phospho-L-seryl-[protein] + ADP + H(+). The catalysed reaction is L-threonyl-[protein] + ATP = O-phospho-L-threonyl-[protein] + ADP + H(+). In Dictyostelium discoideum (Social amoeba), this protein is Probable serine/threonine-protein kinase clkA (clkA).